The chain runs to 173 residues: Mesencephalic astrocyte-derived neurotrophic factor homolog (173 aa).

The N-terminal stretch at methionine 1–alanine 22 is a signal peptide. Intrachain disulfides connect cysteine 28-cysteine 114, cysteine 31-cysteine 103, cysteine 61-cysteine 72, and cysteine 148-cysteine 151.

This sequence belongs to the ARMET family.

The protein resides in the secreted. Its function is as follows. Required during the maturation of the embryonic nervous system for maintenance of neuronal and cuticular connectivity. Essential for maintenance of dopaminergic neurons and dopamine levels. In Drosophila grimshawi (Hawaiian fruit fly), this protein is Mesencephalic astrocyte-derived neurotrophic factor homolog.